The chain runs to 284 residues: MELWYTEQHTEDVRFSIKVDNQLYSGQSEFQRIDVFESKEFGKFFTLDGLMMVTEKDEFIYHDMITHIPMATNPKIKNVLVIGAGDGGTVRELTRYETIENIDMVEIDKLVVDICKEYLPQTASKLEDPRVHIYYEDGLKFVRTKENEYDLIIVDSTDPFGPGEGLFTKEFYGNCFKALKEDGILVNQHESPYYASYAKSMKRAHKRIKEFFPICKVYQAHIPTYPSGHWLFGFASKKYDPIEDLNSEAWNALGLQTKYYNTDLHMGCFALPNYVKELLEKEEE.

The region spanning 2 to 237 (ELWYTEQHTE…GHWLFGFASK (236 aa)) is the PABS domain. An S-methyl-5'-thioadenosine-binding site is contributed by glutamine 31. Histidine 62 and aspartate 86 together coordinate spermidine. S-methyl-5'-thioadenosine-binding positions include glutamate 106 and 137–138 (DG). The active-site Proton acceptor is the aspartate 155. Residue 155-158 (DSTD) participates in spermidine binding. An S-methyl-5'-thioadenosine-binding site is contributed by proline 162.

The protein belongs to the spermidine/spermine synthase family. As to quaternary structure, homodimer or homotetramer.

Its subcellular location is the cytoplasm. It carries out the reaction S-adenosyl 3-(methylsulfanyl)propylamine + putrescine = S-methyl-5'-thioadenosine + spermidine + H(+). It participates in amine and polyamine biosynthesis; spermidine biosynthesis; spermidine from putrescine: step 1/1. Its function is as follows. Catalyzes the irreversible transfer of a propylamine group from the amino donor S-adenosylmethioninamine (decarboxy-AdoMet) to putrescine (1,4-diaminobutane) to yield spermidine. This is Polyamine aminopropyltransferase from Alkaliphilus oremlandii (strain OhILAs) (Clostridium oremlandii (strain OhILAs)).